Reading from the N-terminus, the 330-residue chain is Inorganic pyrophosphatase 2, mitochondrial (330 aa).

The transit peptide at 1–27 (MRALLPLLSVGRGWRVGAAARPPRRVM) directs the protein to the mitochondrion. Residues Asp-159, Asp-164, and Asp-196 each coordinate Mg(2+). An N6-succinyllysine modification is found at Lys-211. Residue Lys-219 is modified to N6-acetyllysine. Lys-254 is subject to N6-succinyllysine. Residue Lys-256 is modified to N6-acetyllysine.

It belongs to the PPase family. As to quaternary structure, homodimer. It depends on Mg(2+) as a cofactor.

Its subcellular location is the mitochondrion. The enzyme catalyses diphosphate + H2O = 2 phosphate + H(+). Hydrolyzes inorganic pyrophosphate. This activity is essential for correct regulation of mitochondrial membrane potential, and mitochondrial organization and function. The polypeptide is Inorganic pyrophosphatase 2, mitochondrial (Ppa2) (Mus musculus (Mouse)).